A 440-amino-acid chain; its full sequence is Enolase (440 aa).

Positions 120–189 (KAAAAEKRVP…TEAMRQGAEV (70 aa)) are igE-binding determinant. 2 residues coordinate substrate: histidine 159 and glutamate 168. Residue glutamate 211 is the Proton donor of the active site. Mg(2+) is bound by residues aspartate 246, glutamate 297, and aspartate 324. Residues glutamate 297 and aspartate 324 each contribute to the substrate site. Catalysis depends on lysine 349, which acts as the Proton acceptor. Substrate contacts are provided by residues 376 to 379 (SHRS) and lysine 400.

Belongs to the enolase family. Homodimer. It depends on Mg(2+) as a cofactor.

The protein localises to the cytoplasm. It carries out the reaction (2R)-2-phosphoglycerate = phosphoenolpyruvate + H2O. Its pathway is carbohydrate degradation; glycolysis; pyruvate from D-glyceraldehyde 3-phosphate: step 4/5. This chain is Enolase (ENO), found in Davidiella tassiana (Mycosphaerella tassiana).